The chain runs to 415 residues: Gamma-glutamyl phosphate reductase (415 aa).

It belongs to the gamma-glutamyl phosphate reductase family.

Its subcellular location is the cytoplasm. It carries out the reaction L-glutamate 5-semialdehyde + phosphate + NADP(+) = L-glutamyl 5-phosphate + NADPH + H(+). It participates in amino-acid biosynthesis; L-proline biosynthesis; L-glutamate 5-semialdehyde from L-glutamate: step 2/2. Catalyzes the NADPH-dependent reduction of L-glutamate 5-phosphate into L-glutamate 5-semialdehyde and phosphate. The product spontaneously undergoes cyclization to form 1-pyrroline-5-carboxylate. This Mycobacterium bovis (strain BCG / Pasteur 1173P2) protein is Gamma-glutamyl phosphate reductase.